A 226-amino-acid polypeptide reads, in one-letter code: LIM domain-containing protein PLIM2a (226 aa).

2 consecutive LIM zinc-binding domains span residues 8–68 and 104–164; these read DKCK…LFKE and DKCA…LFLE. Residues 173-226 are disordered; the sequence is QAAANHRRSASSGGASPPSDDHKPDDTASIPEAKEDDAAPEAAGEEEPEPVVES. The span at 191 to 209 shows a compositional bias: basic and acidic residues; that stretch reads SDDHKPDDTASIPEAKEDD. Acidic residues predominate over residues 210–226; it reads AAPEAAGEEEPEPVVES.

As to quaternary structure, interacts with F-actin. Predominantly expressed in flowers, in the tapetum and in pollen grains. Detected in leaves and stems.

The protein localises to the cytoplasm. It is found in the cytoskeleton. In terms of biological role, binds to actin filaments and promotes cross-linking into thick bundles. Has an actin-stabilizing activity. The actin regulatory activities are inhibited by pH &gt; 6.8 but are [Ca(2+)] independent. In Arabidopsis thaliana (Mouse-ear cress), this protein is LIM domain-containing protein PLIM2a.